The sequence spans 142 residues: Transcriptional regulator MraZ (142 aa).

SpoVT-AbrB domains are found at residues 5–51 (ASAL…PRPE) and 77–120 (AMDV…DAQT).

Belongs to the MraZ family. In terms of assembly, forms oligomers.

Its subcellular location is the cytoplasm. It localises to the nucleoid. This is Transcriptional regulator MraZ from Burkholderia mallei (strain NCTC 10247).